Consider the following 339-residue polypeptide: UDP-N-acetylglucosamine/UDP-N-acetylgalactosamine transporter nstp-4 (339 aa).

8 helical membrane passes run 44-64 (LSST…FFVI), 94-114 (LKVA…FFAL), 148-168 (YNWM…YPSG), 186-206 (ILGL…GVYF), 224-244 (LAFF…WQAI), 255-275 (GVIW…ALVV), 281-301 (ILKG…SWLV), and 305-325 (LTIT…TFLY).

It belongs to the nucleotide-sugar transporter family. SLC35A subfamily. Widely expressed, including in pharynx and pharyngeal gland cells, seam cells, spermatheca, stomatointestinal muscle, vulva, and body wall muscle.

It localises to the golgi apparatus membrane. In terms of biological role, uridine diphosphate-N-acetylglucosamine (UDP-GlcNAc) transporter in the Golgi apparatus. UDP-N-acetylgalactosamine (UDP-GalNAc) transporter in the Golgi apparatus. Apparently transports UDP-GlcNAc and UDP-GalNAc simultaneously, and independently, by an unknown mechanism. Functions redundantly with nucleotide sugar transporter srf-3. May be involved in gonadal development. This chain is UDP-N-acetylglucosamine/UDP-N-acetylgalactosamine transporter nstp-4, found in Caenorhabditis elegans.